The sequence spans 567 residues: Phenylalanine--tRNA ligase beta subunit (567 aa).

Residues 287–362 (YFQEEVEFNV…IGEGLASFHP (76 aa)) enclose the B5 domain. Mg(2+) is bound by residues aspartate 340, aspartate 346, glutamate 349, and aspartate 350.

It belongs to the phenylalanyl-tRNA synthetase beta subunit family. Type 2 subfamily. Tetramer of two alpha and two beta subunits. It depends on Mg(2+) as a cofactor.

It localises to the cytoplasm. The enzyme catalyses tRNA(Phe) + L-phenylalanine + ATP = L-phenylalanyl-tRNA(Phe) + AMP + diphosphate + H(+). The polypeptide is Phenylalanine--tRNA ligase beta subunit (Borreliella afzelii (strain PKo) (Borrelia afzelii)).